The sequence spans 479 residues: MTMIALNREVETQSLKKLSLKSVRRAREIFSPVHGQFPQPDPESKRIRLCHKIQVAFGGVEPASKPTRIADHNSEKTAPLKALALPGPKGSKELRKSATEKALVVGPTLPPRDLNNTGNPGKSTAILPAPGSFSERNLSTAALMERMPSRWPRPEWHAPWKNYRVLQGHLGWVRSVAFDPSNEWFCTGSADRTIKIWDVATGVLKLTLTGHIGQVRGLAVSNRHTYMFSAGDDKQVKCWDLEQNKVIRSYHGHLHGVYCLALHPTLDVVLTGGRDSVCRVWDIRTKMQIFVLPHDSDVFSVLARPTDPQVITGSHDSTIKFWDLRYGKSMATITNHKKTVRAMALHPKENDFVSASADNIKKFSLPKGEFCHNMLSLQRDIINAVAVNEDGVMVTGGDKGGLWFWDWKSGHNFQRAETIVQPGSLESEAGIYAACYDQTGSRLVTCEGDKTIKMWKEDEDATPETHPLNFKPPKEIRRF.

WD repeat units lie at residues Gly-168–Asp-198, Gly-210–Asp-240, Gly-252–Asp-282, Pro-293–Asp-323, Asn-335–Ser-364, Leu-377–Asp-406, and Glu-426–Lys-456. 2 consecutive short sequence motifs (DWD box) follow at residues Val-269–Arg-284 and Val-310–Arg-325. Residues Asp-458 to Phe-479 form a disordered region.

Belongs to the WD repeat PRL1/PRL2 family.

Pleiotropic regulator. The chain is Protein pleiotropic regulator PRL2 (PRL2) from Arabidopsis thaliana (Mouse-ear cress).